The primary structure comprises 161 residues: MPSFDVVSELDKHEVQNAVDNAIKDLDRRYDLKGKGTFEFKDKEQTVLLTAEEEFQLEAMLEILRLALVKRKIDVKCLETKDPYASGKEKKQEAKFREGIDKDLAKKIVATIKDGKLKVQAAIQGEQVRVTGKKRDDLQEAIALLRTKEFDMPLQFNNFRD.

The protein belongs to the YajQ family.

Its function is as follows. Nucleotide-binding protein. This Pseudomonas entomophila (strain L48) protein is Nucleotide-binding protein PSEEN4469.